A 254-amino-acid polypeptide reads, in one-letter code: Urease accessory protein UreF (254 aa).

Positions 1-11 are enriched in basic and acidic residues; it reads MDKGKSVKSTE. Residues 1–26 form a disordered region; that stretch reads MDKGKSVKSTEKSVGMPPKTPKTDNN.

The protein belongs to the UreF family. As to quaternary structure, ureH, UreF and UreG form a complex that acts as a GTP-hydrolysis-dependent molecular chaperone, activating the urease apoprotein by helping to assemble the nickel containing metallocenter of UreC. The UreE protein probably delivers the nickel.

Its subcellular location is the cytoplasm. Required for maturation of urease via the functional incorporation of the urease nickel metallocenter. The chain is Urease accessory protein UreF from Helicobacter pylori (strain ATCC 700392 / 26695) (Campylobacter pylori).